Here is a 124-residue protein sequence, read N- to C-terminus: Fluoride-specific ion channel FluC (124 aa).

4 helical membrane passes run 2-22, 35-55, 71-91, and 100-120; these read LNIA…RWLI, TGTL…IAWF, TGFC…VALF, and LGTM…AFWL. G75 and T78 together coordinate Na(+).

This sequence belongs to the fluoride channel Fluc/FEX (TC 1.A.43) family.

It localises to the cell inner membrane. The catalysed reaction is fluoride(in) = fluoride(out). With respect to regulation, na(+) is not transported, but it plays an essential structural role and its presence is essential for fluoride channel function. Its function is as follows. Fluoride-specific ion channel. Important for reducing fluoride concentration in the cell, thus reducing its toxicity. In Proteus mirabilis (strain HI4320), this protein is Fluoride-specific ion channel FluC.